Reading from the N-terminus, the 522-residue chain is Sugar carrier protein A (522 aa).

Residues Met-1–Lys-22 lie on the Cytoplasmic side of the membrane. A run of 12 helical transmembrane segments spans residues Val-23–Tyr-43, Ala-87–Thr-107, Ile-121–Leu-141, Ile-144–Met-164, Leu-173–Tyr-193, Leu-205–Pro-225, Leu-286–Phe-306, Ala-322–Ala-342, Phe-351–Leu-371, Ser-384–Trp-404, Ala-430–Phe-450, and Gly-453–Leu-473. Residues Pro-474–Lys-522 are Cytoplasmic-facing.

This sequence belongs to the major facilitator superfamily. Sugar transporter (TC 2.A.1.1) family.

The protein localises to the membrane. This chain is Sugar carrier protein A (STA), found in Ricinus communis (Castor bean).